The primary structure comprises 277 residues: Omega-amidase NIT2 (277 aa).

A CN hydrolase domain is found at 4–248 (FRLAVVQLHV…ESVVYADIDL (245 aa)). The active-site Proton acceptor is the glutamate 43. Lysine 112 functions as the Proton donor in the catalytic mechanism. Catalysis depends on cysteine 153, which acts as the Nucleophile.

The protein belongs to the carbon-nitrogen hydrolase superfamily. NIT1/NIT2 family. As to quaternary structure, homodimer.

The protein localises to the cytoplasm. The catalysed reaction is 2-oxoglutaramate + H2O = 2-oxoglutarate + NH4(+). It catalyses the reaction 2-oxosuccinamate + H2O = oxaloacetate + NH4(+). Has omega-amidase activity. The role of omega-amidase is to remove potentially toxic intermediates by converting 2-oxoglutaramate and 2-oxosuccinamate to biologically useful 2-oxoglutarate and oxaloacetate, respectively. The protein is Omega-amidase NIT2 (nit2) of Danio rerio (Zebrafish).